Consider the following 311-residue polypeptide: tRNA dimethylallyltransferase (311 aa).

An ATP-binding site is contributed by 14–21 (GPTAVGKT). 16-21 (TAVGKT) is a substrate binding site. The interaction with substrate tRNA stretch occupies residues 39 to 42 (DSMQ).

The protein belongs to the IPP transferase family. In terms of assembly, monomer. The cofactor is Mg(2+).

It catalyses the reaction adenosine(37) in tRNA + dimethylallyl diphosphate = N(6)-dimethylallyladenosine(37) in tRNA + diphosphate. In terms of biological role, catalyzes the transfer of a dimethylallyl group onto the adenine at position 37 in tRNAs that read codons beginning with uridine, leading to the formation of N6-(dimethylallyl)adenosine (i(6)A). This chain is tRNA dimethylallyltransferase, found in Lactiplantibacillus plantarum (strain ATCC BAA-793 / NCIMB 8826 / WCFS1) (Lactobacillus plantarum).